The primary structure comprises 275 residues: Ovocalyxin-32 (275 aa).

Residues 1–23 (MPGLRAALPAALLLLSSFPPAAA) form the signal peptide. Cystatin LXN-type domains lie at 32 to 131 (PGVM…NKKQ) and 151 to 255 (TANY…GLED). Positions 254 to 275 (EDGSGQDSGSAAGTSHETKGNF) are disordered. A compositionally biased stretch (low complexity) spans 256 to 268 (GSGQDSGSAAGTS).

It belongs to the protease inhibitor I47 (latexin) family. Expressed at high levels in the uterine and isthmus regions of the oviduct, and concentrated in the eggshell.

The protein resides in the secreted. Its function is as follows. Component of the matrix of the eggshell. The chain is Ovocalyxin-32 from Gallus gallus (Chicken).